Consider the following 105-residue polypeptide: Synaptic plasticity regulator PANTS (105 aa).

This sequence belongs to the UPF0545 family. Interacts with RTN4 isoform A/Nogo-A; the interaction results in enhanced RTN4-mediated inhibition of AMPA receptor clustering. Also interacts with NCAM1, RANBP2 and CCT8. In terms of processing, rapidly degraded by proteolysis following neuronal stimulation, resulting in increased AMPA receptor clustering. As to expression, in the postnatal brain, expressed diffusely throughout the hippocampus at a low level at 8 weeks (at protein level). At 16 weeks, strongly expressed in the stratum lucidum of the hippocampus (at protein level). In developing and aging brain, expression is strongest in hippocampus, especially in areas CA3 and CA2, throughout the dorsoventral axis.

It is found in the synapse. The protein resides in the synaptic cleft. Functionally, negatively regulates long-term potentiation and modulates adult synaptic plasticity. Stabilizes the interaction of RTN4 isoform A/Nogo-A with its receptors, inhibiting clustering of postsynaptic AMPA receptors at synaptic sites. Upon neuronal stimulation, degraded at synapses, reducing RTN4 signaling and allowing AMPA receptor clustering at individual synapses. The protein is Synaptic plasticity regulator PANTS of Mus musculus (Mouse).